A 229-amino-acid chain; its full sequence is Putative N-acetylmannosamine-6-phosphate 2-epimerase (229 aa).

This sequence belongs to the NanE family.

It carries out the reaction an N-acyl-D-glucosamine 6-phosphate = an N-acyl-D-mannosamine 6-phosphate. It functions in the pathway amino-sugar metabolism; N-acetylneuraminate degradation; D-fructose 6-phosphate from N-acetylneuraminate: step 3/5. In terms of biological role, converts N-acetylmannosamine-6-phosphate (ManNAc-6-P) to N-acetylglucosamine-6-phosphate (GlcNAc-6-P). This Escherichia fergusonii (strain ATCC 35469 / DSM 13698 / CCUG 18766 / IAM 14443 / JCM 21226 / LMG 7866 / NBRC 102419 / NCTC 12128 / CDC 0568-73) protein is Putative N-acetylmannosamine-6-phosphate 2-epimerase.